Reading from the N-terminus, the 117-residue chain is Large ribosomal subunit protein bL17 (117 aa).

It belongs to the bacterial ribosomal protein bL17 family. As to quaternary structure, part of the 50S ribosomal subunit. Contacts protein L32.

In Endomicrobium trichonymphae, this protein is Large ribosomal subunit protein bL17.